The sequence spans 911 residues: Transferrin-binding protein A (911 aa).

An N-terminal signal peptide occupies residues 1–24 (MQQQHLFRLNILCLSLMTALPAYA). The TonB box signature appears at 38–45 (DTIQVKAK). The TBDR plug domain occupies 51-176 (RDNEVTGLGK…LAGSVAFQTK (126 aa)). In terms of domain architecture, TBDR beta-barrel spans 187-911 (QWGIQSKTAY…NYTFSLEMKF (725 aa)). Residues 894 to 911 (NRYAAPGRNYTFSLEMKF) carry the TonB C-terminal box motif.

The protein belongs to the TonB-dependent receptor family. Binds both human apo- and holo-transferrin (TF), via the TF C-terminus. Forms a large complex with TF and TbpB.

The protein resides in the cell outer membrane. In terms of biological role, neisseria acquires iron by extracting it from serum transferrin (TF) in its human host. Acts as a TF receptor and is required for TF utilization. Binds both apo- and holo-TF, via the TF C-terminus. The polypeptide is Transferrin-binding protein A (Neisseria meningitidis serogroup B).